Here is a 216-residue protein sequence, read N- to C-terminus: Protein InaA (216 aa).

The protein belongs to the protein kinase superfamily. KdkA/RfaP family.

Functionally, may be an environmental sensor responsive to several stimuli, including internal pH, proton motive force, temperature, and possibly other unknown factors. This Escherichia coli (strain K12) protein is Protein InaA (inaA).